A 120-amino-acid chain; its full sequence is Nascent polypeptide-associated complex protein (120 aa).

Residues 12–80 (GMNPAKMKQM…VKEVPKSLEI (69 aa)) enclose the NAC-A/B domain.

This sequence belongs to the NAC-alpha family. In terms of assembly, homodimer. Interacts with the ribosome. Binds ribosomal RNA.

Contacts the emerging nascent chain on the ribosome. The protein is Nascent polypeptide-associated complex protein of Methanosarcina mazei (strain ATCC BAA-159 / DSM 3647 / Goe1 / Go1 / JCM 11833 / OCM 88) (Methanosarcina frisia).